Reading from the N-terminus, the 141-residue chain is Hemoglobin subunit alpha (141 aa).

The 141-residue stretch at 1-141 (VLSGTDKSNI…VSTVLTSKYR (141 aa)) folds into the Globin domain. The residue at position 3 (serine 3) is a Phosphoserine. N6-succinyllysine is present on residues lysine 7 and lysine 11. At lysine 16 the chain carries N6-acetyllysine; alternate. At lysine 16 the chain carries N6-succinyllysine; alternate. Tyrosine 24 bears the Phosphotyrosine mark. Serine 35 is modified (phosphoserine). Lysine 40 bears the N6-succinyllysine mark. Serine 49 is modified (phosphoserine). Residue histidine 58 participates in O2 binding. Heme b is bound at residue histidine 87. Serine 102 bears the Phosphoserine mark. The residue at position 108 (threonine 108) is a Phosphothreonine. The residue at position 124 (serine 124) is a Phosphoserine. Residues threonine 134 and threonine 137 each carry the phosphothreonine modification. Phosphoserine is present on serine 138.

It belongs to the globin family. As to quaternary structure, heterotetramer of two alpha chains and two beta chains. In terms of tissue distribution, red blood cells.

Functionally, involved in oxygen transport from the lung to the various peripheral tissues. Its function is as follows. Hemopressin acts as an antagonist peptide of the cannabinoid receptor CNR1. Hemopressin-binding efficiently blocks cannabinoid receptor CNR1 and subsequent signaling. This chain is Hemoglobin subunit alpha (HBA), found in Talpa europaea (European mole).